The sequence spans 328 residues: Ferredoxin--NADP reductase 1 (328 aa).

Residues E37, K45, Y49, V89, and T310 each coordinate FAD.

The protein belongs to the ferredoxin--NADP reductase type 2 family. Homodimer. FAD is required as a cofactor.

It catalyses the reaction 2 reduced [2Fe-2S]-[ferredoxin] + NADP(+) + H(+) = 2 oxidized [2Fe-2S]-[ferredoxin] + NADPH. The chain is Ferredoxin--NADP reductase 1 from Latilactobacillus sakei subsp. sakei (strain 23K) (Lactobacillus sakei subsp. sakei).